A 608-amino-acid polypeptide reads, in one-letter code: Formate hydrogenlyase subunit 3 (608 aa).

The next 12 helical transmembrane spans lie at 10-26 (GVAW…LFSF), 44-67 (LYTA…LSLV), 76-93 (LNAI…FVSL), 116-140 (AAAV…MALC), 153-173 (LWFA…WLLW), 197-218 (IWLL…HGWV), 229-251 (AAAL…LSLL), 258-280 (WWGI…YALV), 296-312 (IGII…GIAL), 416-440 (LAVG…VTFL), 453-476 (CAPL…GVAA), and 502-521 (MITL…MAIC).

The protein belongs to the complex I subunit 4 family. In terms of assembly, FHL comprises of a formate dehydrogenase, unidentified electron carriers and a hydrogenase (isoenzyme 3). In this non-energy conserving pathway molecular hydrogen and carbodioxide from formate are released.

The protein resides in the cell inner membrane. The polypeptide is Formate hydrogenlyase subunit 3 (hycC) (Escherichia coli (strain K12)).